The following is a 359-amino-acid chain: MAGMKTSPSQDEEACVLAIQLATSTVLPMILKSAIELDILNTISKAGPGNYLSPSDLASKLLMSNPHAPIMLERILRVLATYKVLGCKPSELSDGEVEWLYCWTPVCKFLSNNEDGASIAPLLLVHQDQVPMKSWYHLTDAILDGGTAFNKAYGMNIFDYASQDPQFNKVFNRSMAGHSTITMKKILETYNGFEGLKSIVDVGGGSGATLNMIISKYPTIKGINFDLPHVVGDSPIHPGVEHVGGDMFASVPKGDAIFLKWIFHSWSDEDCLRILKNCYEALADNKKVIVAEFIIPEVPGGSDDATKSVVHLDAVMLAYVPGGKERTEKEFEALATSAGFKSFRKVCCAFNTWIMEFSK.

H126 is a binding site for bergaptol. S-adenosyl-L-homocysteine is bound by residues S179, G203, D226, D246, and K260. Bergaptol is bound at residue H264. H264 (proton acceptor) is an active-site residue.

It belongs to the class I-like SAM-binding methyltransferase superfamily. Cation-independent O-methyltransferase family. COMT subfamily. Homodimer. In terms of tissue distribution, mostly expressed in roots and, to a lower extent, in stems and leaves.

The protein localises to the cytoplasm. It carries out the reaction bergaptol + S-adenosyl-L-methionine = bergapten + S-adenosyl-L-homocysteine. The protein operates within aromatic compound metabolism. It participates in secondary metabolite biosynthesis. Functionally, O-methyltransferase involved in the biosynthesis of furocoumarins natural products such as bergapten, a photosensitizer used for medical purpose such as treating psoriasis and vitiligo or facilitating resistance to microbial infection and other stresses. Catalyzes specifically the methylation of bergaptol. Not active on xanthotol, isoscopoletin, scopoletin and esculetin. This Kitagawia praeruptora (Peucedanum praeruptorum) protein is Bergaptol O-methyltransferase.